A 254-amino-acid chain; its full sequence is MKILLSNDDGVGAKGIAVLYQALMQIAEVTLVAPDRNCSGASNSLTLLNPLRATKLENGFISVNGTPTDCVHLGVNQLVDEMPDLVVAGINHGANLGDDTLYSGTVAAATEGRHLGLPAIAVSLCSHHGEHFETAAAVTISIIKGLASHPLPKDQIININVPDIPLSELKGVQVTRLGARHKAETMTKQTDPWGRDIYWYGSLGTESDAGEGTDFHAINNGYASVTPLSVDMTANESIKAVGEWLADLEINRAG.

A divalent metal cation-binding residues include Asp-8, Asp-9, Ser-39, and Asn-91.

The protein belongs to the SurE nucleotidase family. It depends on a divalent metal cation as a cofactor.

Its subcellular location is the cytoplasm. It carries out the reaction a ribonucleoside 5'-phosphate + H2O = a ribonucleoside + phosphate. In terms of biological role, nucleotidase that shows phosphatase activity on nucleoside 5'-monophosphates. The protein is 5'-nucleotidase SurE of Pseudoalteromonas translucida (strain TAC 125).